Here is a 365-residue protein sequence, read N- to C-terminus: L-lactate oxidase (365 aa).

Residues 6-365 enclose the FMN hydroxy acid dehydrogenase domain; it reads RIPPGVWNAI…ITHDTLTPSC (360 aa). A pyruvate-binding site is contributed by Tyr32. FMN contacts are provided by residues 85–87, Ser114, and Gln135; that span reads PVA. Tyr137 contacts pyruvate. Residues Thr163, Lys237, and Ser259 each coordinate FMN. Positions 261 and 264 each coordinate pyruvate. His261 acts as the Proton acceptor in catalysis. FMN contacts are provided by residues 292-296 and Arg316; that span reads DGGVR.

Belongs to the FMN-dependent alpha-hydroxy acid dehydrogenase family. In terms of assembly, homotetramer. Requires FMN as cofactor.

The enzyme catalyses (S)-lactate + O2 = pyruvate + H2O2. The catalysed reaction is glycolate + O2 = glyoxylate + H2O2. Its function is as follows. Catalyzes the oxidation of (S)-lactate (L-lactate) to pyruvate, with a reduction of O2 to H2O2. To a lesser extent is also able to use glycolate as substrate. This is L-lactate oxidase from Alicycliphilus denitrificans (strain DSM 14773 / CIP 107495 / K601).